A 308-amino-acid polypeptide reads, in one-letter code: 2-methylisocitrate lyase (308 aa).

54–56 (SGG) contacts substrate. Mg(2+) contacts are provided by Asp94 and Asp96. Substrate contacts are provided by residues 131–132 (CG), Arg166, Glu196, 224–226 (NIT), Arg255, and Arg284.

It belongs to the isocitrate lyase/PEP mutase superfamily. Methylisocitrate lyase family. In terms of assembly, homotetramer; dimer of dimers. Mg(2+) serves as cofactor.

The catalysed reaction is (2S,3R)-3-hydroxybutane-1,2,3-tricarboxylate = pyruvate + succinate. The protein operates within organic acid metabolism; propanoate degradation. Its function is as follows. Involved in the catabolism of short chain fatty acids (SCFA) via the 2-methylcitrate cycle I (propionate degradation route). Catalyzes the thermodynamically favored C-C bond cleavage reaction of (2R,3S)-2-methylisocitrate to yield pyruvate and succinate via an alpha-carboxy-carbanion intermediate. The chain is 2-methylisocitrate lyase from Vibrio cholerae serotype O1 (strain ATCC 39315 / El Tor Inaba N16961).